A 213-amino-acid chain; its full sequence is Small ribosomal subunit protein uS3c (213 aa).

The KH type-2 domain maps to 39-109 (IRKYLNAKLA…KFRITITYLQ (71 aa)).

It belongs to the universal ribosomal protein uS3 family. Part of the 30S ribosomal subunit.

It is found in the plastid. The protein localises to the chloroplast. The polypeptide is Small ribosomal subunit protein uS3c (rps3) (Mesostigma viride (Green alga)).